Here is a 427-residue protein sequence, read N- to C-terminus: Enolase (427 aa).

Glutamine 163 provides a ligand contact to (2R)-2-phosphoglycerate. Catalysis depends on glutamate 205, which acts as the Proton donor. Mg(2+)-binding residues include aspartate 242, glutamate 285, and aspartate 312. 4 residues coordinate (2R)-2-phosphoglycerate: lysine 337, arginine 366, serine 367, and lysine 388. Residue lysine 337 is the Proton acceptor of the active site.

It belongs to the enolase family. Mg(2+) is required as a cofactor.

The protein localises to the cytoplasm. It localises to the secreted. It is found in the cell surface. It catalyses the reaction (2R)-2-phosphoglycerate = phosphoenolpyruvate + H2O. It participates in carbohydrate degradation; glycolysis; pyruvate from D-glyceraldehyde 3-phosphate: step 4/5. Functionally, catalyzes the reversible conversion of 2-phosphoglycerate (2-PG) into phosphoenolpyruvate (PEP). It is essential for the degradation of carbohydrates via glycolysis. This chain is Enolase, found in Leptothrix cholodnii (strain ATCC 51168 / LMG 8142 / SP-6) (Leptothrix discophora (strain SP-6)).